The primary structure comprises 210 residues: High mobility group protein B2 (210 aa).

At Lys-3 the chain carries N6-acetyllysine. The HMG box 1 DNA-binding region spans 9 to 79; that stretch reads PRGKMSSYAF…RYDREMKNYV (71 aa). Cys-23 bears the Cysteine sulfonic acid (-SO3H); alternate mark. Residues Cys-23 and Cys-45 are joined by a disulfide bond. Lys-30 carries the N6-acetyllysine modification. Ser-35 is subject to Phosphoserine. Residue Lys-43 is modified to N6-acetyllysine. At Cys-45 the chain carries Cysteine sulfonic acid (-SO3H); alternate. The disordered stretch occupies residues 71–102; that stretch reads YDREMKNYVPPKGDKKGKKKDPNAPKRPPSAF. An N6-acetyllysine modification is found at Lys-90. Positions 95–163 form a DNA-binding region, HMG box 2; it reads PKRPPSAFFL…KYEKDIAAYR (69 aa). Ser-100 is subject to Phosphoserine. Residue Cys-106 is modified to Cysteine sulfonic acid (-SO3H). N6-acetyllysine is present on residues Lys-114 and Lys-141. Basic and acidic residues predominate over residues 162-172; that stretch reads YRAKGKSEAGK. Residues 162-210 form a disordered region; it reads YRAKGKSEAGKKGPGRPTGSKKKNEPEDEEEEEEEEEEEDDEEEEEDEE. The required for chemotactic activity stretch occupies residues 165–180; the sequence is KGKSEAGKKGPGRPTG. The span at 187-210 shows a compositional bias: acidic residues; it reads PEDEEEEEEEEEEEDDEEEEEDEE.

This sequence belongs to the HMGB family. As to quaternary structure, interacts with POU2F2, POU2F1 and POU3F1. Component of the RAG complex composed of core components RAG1 and RAG2, and associated component HMGB1 or HMGB2. Component of the SET complex, composed of at least ANP32A, APEX1, HMGB2, NME1, SET and TREX1. Directly interacts with SET. Interacts with LEF1. Reduction/oxidation of cysteine residues Cys-23, Cys-45 and Cys-106 and a possible intramolecular disulfide bond involving Cys-23 and Cys-45 give rise to different redox forms with specific functional activities in various cellular compartments: 1- fully reduced HMGB2 (HMGB2C23hC45hC106h), 2- disulfide HMGB2 (HMGB2C23-C45C106h) and 3- sulfonyl HMGB2 (HMGB2C23soC45soC106so). As to expression, widely expressed in embryo. In adult mainly expressed in lymphoid organs and testes. Expressed in primary spermatocytes. Expressed in the superficial zone of articular cartilage.

It is found in the nucleus. The protein localises to the chromosome. It localises to the cytoplasm. Its subcellular location is the secreted. In terms of biological role, multifunctional protein with various roles in different cellular compartments. May act in a redox sensitive manner. In the nucleus is an abundant chromatin-associated non-histone protein involved in transcription, chromatin remodeling and V(D)J recombination and probably other processes. Binds DNA with a preference to non-canonical DNA structures such as single-stranded DNA. Can bent DNA and enhance DNA flexibility by looping thus providing a mechanism to promote activities on various gene promoters by enhancing transcription factor binding and/or bringing distant regulatory sequences into close proximity. Involved in V(D)J recombination by acting as a cofactor of the RAG complex: acts by stimulating cleavage and RAG protein binding at the 23 bp spacer of conserved recombination signal sequences (RSS). Proposed to be involved in the innate immune response to nucleic acids by acting as a cytoplasmic promiscuous immunogenic DNA/RNA sensor which cooperates with subsequent discriminative sensing by specific pattern recognition receptors. In the extracellular compartment acts as a chemokine. Promotes proliferation and migration of endothelial cells implicating AGER/RAGE. Has antimicrobial activity in gastrointestinal epithelial tissues. Involved in inflammatory response to antigenic stimulus coupled with pro-inflammatory activity. May play a role in germ cell differentiation. Involved in modulation of neurogenesis probably by regulation of neural stem proliferation. Involved in articular cartilage surface maintenance implicating LEF1 and the Wnt/beta-catenin pathway. This chain is High mobility group protein B2 (Hmgb2), found in Mus musculus (Mouse).